Reading from the N-terminus, the 438-residue chain is POU domain, class 3, transcription factor 3-A (438 aa).

Disordered stretches follow at residues 22 to 43 (VHSE…SVSG), 102 to 172 (SPWS…QSQQ), and 186 to 248 (GMLN…PTSD). 2 stretches are compositionally biased toward polar residues: residues 103 to 123 (PWSS…VKSS) and 146 to 159 (QSHQ…TASH). Positions 160–172 (ISTITGGQQQSQQ) are enriched in low complexity. Basic residues predominate over residues 210 to 230 (HHHHHHHQQQHPHHHHHHQHH). In terms of domain architecture, POU-specific spans 242-316 (EDTPTSDDLE…LLNKWLEEAD (75 aa)). A DNA-binding region (homeobox) is located at residues 334–393 (KRKKRTSIEVSVKGALESHFLKCPKPSAQEITSLADNLQLEKEVVRVWFCNRRQKEKRMT).

The protein belongs to the POU transcription factor family. Class-3 subfamily. As to expression, predominantly expressed in the embryonic and adult central nervous system. In adults, isoform 2 is expressed in the brain, ovary, basal cells of the skin and muscle satellite cells.

Its subcellular location is the nucleus. Its function is as follows. Transcription factor that may play important roles in patterning the embryonic brain. This chain is POU domain, class 3, transcription factor 3-A (pou3f3a), found in Danio rerio (Zebrafish).